Here is a 598-residue protein sequence, read N- to C-terminus: Rho-related protein racA (598 aa).

Residue 11-17 (DGAVGKS) coordinates GTP. Positions 32 to 40 (YVPTVFDNY) match the Effector region motif. GTP contacts are provided by residues 57-61 (DTAGQ) and 115-118 (TKND). The disordered stretch occupies residues 175–210 (ASAKKKGGFFSSSSSSSSSSSSKSSEKSVPIPPVMP). The segment covering 182 to 197 (GFFSSSSSSSSSSSSK) has biased composition (low complexity). 2 BTB domains span residues 239–344 (SDVK…NYLD) and 405–472 (SDIQ…PIEE).

The protein in the N-terminal section; belongs to the small GTPase superfamily. Rho family. Interacts with pakB.

This is Rho-related protein racA (racA) from Dictyostelium discoideum (Social amoeba).